Here is a 303-residue protein sequence, read N- to C-terminus: Digeranylgeranylglyceryl phosphate synthase (303 aa).

7 consecutive transmembrane segments (helical) span residues 23–43 (VLGVIAGAALLGEVNVAAAIA), 88–108 (LALALLALGPLLGLAVGPLTG), 130–150 (LPGNLAVSFSTASTLLYGSLA), 164–184 (TIPIILMVFLMTLAREVVKGV), 206–228 (FALRAALALACASLALAYLAAPL), 232–254 (GYAFLAFVTLGGLLSLASVAACL), and 272–292 (VAMFLGLIGILVDRLVQPVFY).

The protein belongs to the UbiA prenyltransferase family. DGGGP synthase subfamily. Mg(2+) is required as a cofactor.

The protein localises to the cell membrane. The catalysed reaction is sn-3-O-(geranylgeranyl)glycerol 1-phosphate + (2E,6E,10E)-geranylgeranyl diphosphate = 2,3-bis-O-(geranylgeranyl)-sn-glycerol 1-phosphate + diphosphate. It functions in the pathway membrane lipid metabolism; glycerophospholipid metabolism. Its function is as follows. Prenyltransferase that catalyzes the transfer of the geranylgeranyl moiety of geranylgeranyl diphosphate (GGPP) to the C2 hydroxyl of (S)-3-O-geranylgeranylglyceryl phosphate (GGGP). This reaction is the second ether-bond-formation step in the biosynthesis of archaeal membrane lipids. The chain is Digeranylgeranylglyceryl phosphate synthase from Ignicoccus hospitalis (strain KIN4/I / DSM 18386 / JCM 14125).